Here is a 434-residue protein sequence, read N- to C-terminus: 3-phosphoshikimate 1-carboxyvinyltransferase (434 aa).

The 3-phosphoshikimate site is built by K22, S23, and R27. K22 contacts phosphoenolpyruvate. Positions 93 and 121 each coordinate phosphoenolpyruvate. 6 residues coordinate 3-phosphoshikimate: S168, S169, Q170, S199, D320, and K347. A phosphoenolpyruvate-binding site is contributed by Q170. The Proton acceptor role is filled by D320. The phosphoenolpyruvate site is built by R351, R394, and K419.

Belongs to the EPSP synthase family. Monomer.

Its subcellular location is the cytoplasm. It carries out the reaction 3-phosphoshikimate + phosphoenolpyruvate = 5-O-(1-carboxyvinyl)-3-phosphoshikimate + phosphate. The protein operates within metabolic intermediate biosynthesis; chorismate biosynthesis; chorismate from D-erythrose 4-phosphate and phosphoenolpyruvate: step 6/7. Catalyzes the transfer of the enolpyruvyl moiety of phosphoenolpyruvate (PEP) to the 5-hydroxyl of shikimate-3-phosphate (S3P) to produce enolpyruvyl shikimate-3-phosphate and inorganic phosphate. This is 3-phosphoshikimate 1-carboxyvinyltransferase from Burkholderia cenocepacia (strain HI2424).